A 397-amino-acid chain; its full sequence is Formate-dependent phosphoribosylglycinamide formyltransferase (397 aa).

N(1)-(5-phospho-beta-D-ribosyl)glycinamide is bound by residues 21 to 22 (EL) and E81. Residues R113, K154, 194–197 (EEYV), and E202 each bind ATP. An ATP-grasp domain is found at 118–313 (KLAAEKVKVP…EFQIHVRSAL (196 aa)). Mg(2+) contacts are provided by E272 and E284. N(1)-(5-phospho-beta-D-ribosyl)glycinamide contacts are provided by residues D291, K361, and 368–369 (RR).

The protein belongs to the PurK/PurT family. In terms of assembly, homodimer.

It catalyses the reaction N(1)-(5-phospho-beta-D-ribosyl)glycinamide + formate + ATP = N(2)-formyl-N(1)-(5-phospho-beta-D-ribosyl)glycinamide + ADP + phosphate + H(+). The protein operates within purine metabolism; IMP biosynthesis via de novo pathway; N(2)-formyl-N(1)-(5-phospho-D-ribosyl)glycinamide from N(1)-(5-phospho-D-ribosyl)glycinamide (formate route): step 1/1. Functionally, involved in the de novo purine biosynthesis. Catalyzes the transfer of formate to 5-phospho-ribosyl-glycinamide (GAR), producing 5-phospho-ribosyl-N-formylglycinamide (FGAR). Formate is provided by PurU via hydrolysis of 10-formyl-tetrahydrofolate. In Sulfurisphaera tokodaii (strain DSM 16993 / JCM 10545 / NBRC 100140 / 7) (Sulfolobus tokodaii), this protein is Formate-dependent phosphoribosylglycinamide formyltransferase.